We begin with the raw amino-acid sequence, 550 residues long: Solute carrier family 22 member 11 (550 aa).

Over 1 to 10 the chain is Cytoplasmic; the sequence is MAFSKLLEQA. A helical membrane pass occupies residues 11–31; sequence GGVGLFQTLQVLTFILPCLMI. Over 32–142 the chain is Extracellular; it reads PSQMLLENFS…DLVCSSQGLK (111 aa). N-linked (GlcNAc...) asparagine glycans are attached at residues asparagine 39, asparagine 56, and asparagine 99. A helical transmembrane segment spans residues 143–163; that stretch reads PLSQSIFMSGILVGSFIWGLL. The Cytoplasmic portion of the chain corresponds to 164-174; that stretch reads SYRFGRKPMLS. Residues 175 to 195 form a helical membrane-spanning segment; it reads WCCLQLAVAGTSTIFAPTFVI. Residues 196–200 lie on the Extracellular side of the membrane; the sequence is YCGLR. A helical membrane pass occupies residues 201–221; sequence FVAAFGMAGIFLSSLTLMVEW. At 222-231 the chain is on the cytoplasmic side; the sequence is TTTSRRAVTM. Residues 232-252 traverse the membrane as a helical segment; it reads TVVGCAFSAGQAALGGLAFAL. Topologically, residues 253 to 256 are extracellular; sequence RDWR. The chain crosses the membrane as a helical span at residues 257-277; it reads TLQLAASVPFFAISLISWWLP. The Cytoplasmic segment spans residues 278 to 346; sequence ESARWLIIKG…FCVPVLRWRS (69 aa). The chain crosses the membrane as a helical span at residues 347–367; that stretch reads CAMLVVNFSLLISYYGLVFDL. At 368–378 the chain is on the extracellular side; it reads QSLGRDIFLLQ. The helical transmembrane segment at 379–399 threads the bilayer; sequence ALFGAVDFLGRATTALLLSFL. Topologically, residues 400 to 402 are cytoplasmic; sequence GRR. Residues 403-423 traverse the membrane as a helical segment; the sequence is TIQAGSQAMAGLAILANMLVP. Residues 424–430 are Extracellular-facing; sequence QDLQTLR. The chain crosses the membrane as a helical span at residues 431-451; it reads VVFAVLGKGCFGISLTCLTIY. The Cytoplasmic segment spans residues 452–463; that stretch reads KAELFPTPVRMT. The helical transmembrane segment at 464-484 threads the bilayer; sequence ADGILHTVGRLGAMMGPLILM. Residues 485 to 490 are Extracellular-facing; sequence SRQALP. A helical membrane pass occupies residues 491–511; that stretch reads LLPPLLYGVISIASSLVVLFF. Residues 512–550 lie on the Cytoplasmic side of the membrane; the sequence is LPETQGLPLPDTIQDLESQKSTAAQGNRQEAVTVESTSL. A disordered region spans residues 531-550; sequence KSTAAQGNRQEAVTVESTSL.

It belongs to the major facilitator (TC 2.A.1) superfamily. Organic cation transporter (TC 2.A.1.19) family. In terms of processing, N-glycosylated. Contains several complex-type N-glycans. As to expression, expressed in placental trophoblasts, syncytiotrophoblast and cytotrophoblast. Also located in the proximal tubules in kidneys.

Its subcellular location is the cell membrane. It localises to the apical cell membrane. It is found in the basal cell membrane. The catalysed reaction is estrone 3-sulfate(out) + glutarate(in) = estrone 3-sulfate(in) + glutarate(out). The enzyme catalyses dehydroepiandrosterone 3-sulfate(out) = dehydroepiandrosterone 3-sulfate(in). It catalyses the reaction prostaglandin F2alpha(out) = prostaglandin F2alpha(in). It carries out the reaction prostaglandin E2(out) = prostaglandin E2(in). Its function is as follows. Antiporter that mediates the transport of conjugated steroids and other specific organic anions at the basal membrane of syncytiotrophoblast and at the apical membrane of proximal tubule epithelial cells, in exchange for anionic compounds. May be responsible for placental absorption of fetal-derived steroid sulfates such as estrone sulfate (E1S) and the steroid hormone precursor dehydroepiandrosterone sulfate (DHEA-S), as well as clearing waste products and xenobiotics from the fetus. Maybe also be involved in placental urate homeostasis. Facilitates the renal reabsorption of organic anions such as urate and derived steroid sulfates. Organic anion glutarate acts as conteranion for E1S renal uptake. Possible transport mode may also include DHEA-S/E1S exchange. Also interacts with inorganic anions such as chloride and hydroxyl ions, therefore possible transport modes may include E1S/Cl(-), E1S/OH(-), urate/Cl(-) and urate/OH(-). Also mediates the transport of prostaglandin E2 (PGE2) and prostaglandin F2-alpha (PGF2-alpha) and may be involved in their renal excretion. Also able to uptake anionic drugs, diuretics, bile salts and ochratoxin A. Mediates the unidirectional efflux of glutamate and aspartate. Glutamate efflux down its transmembrane gradient may drive SLC22A11/OAT4-mediated placental uptake of E1S. The sequence is that of Solute carrier family 22 member 11 from Homo sapiens (Human).